A 23-amino-acid chain; its full sequence is Melittin-related peptide AK-23-1 (23 aa).

Lysine amide is present on Lys-23.

In terms of tissue distribution, expressed by the skin glands.

It localises to the secreted. This is Melittin-related peptide AK-23-1 from Rana arvalis (Moor frog).